The following is a 412-amino-acid chain: Aurora kinase (412 aa).

Residues 94-119 (NEKVRPSKSSHIPVKSPIRKKGHSPA) are disordered. One can recognise a Protein kinase domain in the interval 148–401 (FEIGKVLGKG…LAEVMNHPWI (254 aa)). ATP contacts are provided by residues 154–162 (LGKGKLGKV) and lysine 177. Catalysis depends on aspartate 271, which acts as the Proton acceptor.

It belongs to the protein kinase superfamily. Ser/Thr protein kinase family. Aurora subfamily.

It localises to the nucleus. The protein resides in the cytoplasm. It is found in the cytoskeleton. The protein localises to the spindle. Its subcellular location is the chromosome. It localises to the centromere. The protein resides in the kinetochore. It carries out the reaction L-seryl-[protein] + ATP = O-phospho-L-seryl-[protein] + ADP + H(+). The catalysed reaction is L-threonyl-[protein] + ATP = O-phospho-L-threonyl-[protein] + ADP + H(+). Functionally, component of the chromosomal passenger complex (CPC), a complex that acts as a key regulator of chromosome segregation and cytokinesis. Has a role in error-correction of aberrent kinetochore-microtubule attachments to ensure that sister kinetochores become bioriented and connect to opposite poles by promoting spindle assembly checkpoint signaling. In Debaryomyces hansenii (strain ATCC 36239 / CBS 767 / BCRC 21394 / JCM 1990 / NBRC 0083 / IGC 2968) (Yeast), this protein is Aurora kinase (IPL1).